A 711-amino-acid polypeptide reads, in one-letter code: 1,4-alpha-glucan-branching enzyme (711 aa).

W98 and K135 together coordinate (1,4-alpha-D-glucosyl)n. The active-site Nucleophile is the D353. E414 acts as the Proton donor in catalysis.

This sequence belongs to the glycosyl hydrolase 13 family. GlgB subfamily.

It localises to the cytoplasm. The catalysed reaction is Transfers a segment of a (1-&gt;4)-alpha-D-glucan chain to a primary hydroxy group in a similar glucan chain.. It functions in the pathway glycan biosynthesis; glycogen biosynthesis. Glycogen-branching enzyme participates in the glycogen biosynthetic process along with glycogenin and glycogen synthase. Generates alpha-1,6-glucosidic branches from alpha-1,4-linked glucose chains, to increase solubility of the glycogen polymer. In Debaryomyces hansenii (strain ATCC 36239 / CBS 767 / BCRC 21394 / JCM 1990 / NBRC 0083 / IGC 2968) (Yeast), this protein is 1,4-alpha-glucan-branching enzyme (GLC3).